The following is a 923-amino-acid chain: TBC1 domain family member 2A (923 aa).

An N-acetylmethionine modification is found at M1. A disordered region spans residues 1 to 39 (MDGAHENAAESSSSVPRSEEPACSAGGPEVLPPEESEGC). The interval 1-171 (MDGAHENAAE…AGNGPTLRLE (171 aa)) is interaction with CADH1. Residues 47–144 (PKKLCGYLSK…WLQQLQTKRW (98 aa)) form the PH domain. Disordered stretches follow at residues 146 to 166 (FHSS…GNGP) and 232 to 289 (RQAQ…LIQK). The tract at residues 301-439 (AEGLTRTRTA…KVTWDFTHPP (139 aa)) is interaction with RAC1. A coiled-coil region spans residues 308 to 486 (RTAQEKILAL…LNSEIHQVTK (179 aa)). A Rab-GAP TBC domain is found at 631–823 (GVPREHRPRV…RVWDAFLYEG (193 aa)). Residues 870-904 (MKQLRQLRRAHRERLEAELHELEQLKAEYLETQSS) are a coiled coil. A disordered region spans residues 900-923 (ETQSSRGPAVPDGCTSEDEGEGEA). Acidic residues predominate over residues 914–923 (TSEDEGEGEA). S915 is modified (phosphoserine).

Interacts with activated RAC1 and CDH1.

It is found in the cytoplasm. The protein localises to the cytoplasmic vesicle. Its subcellular location is the cell junction. Its function is as follows. Acts as a GTPase-activating protein for RAB7A. Signal effector acting as a linker between RAC1 and RAB7A, leading to RAB7A inactivation and subsequent inhibition of cadherin degradation and reduced cell-cell adhesion. This is TBC1 domain family member 2A (TBC1D2) from Ailuropoda melanoleuca (Giant panda).